The primary structure comprises 397 residues: Serine/threonine-protein kinase 17A (397 aa).

The disordered stretch occupies residues 1-23 (MIPLEKPGSGGSPSAAASGSGPG). Ser-9 carries the phosphoserine modification. The 261-residue stretch at 44–304 (LSPGRELGRG…AEECLKHPWL (261 aa)) folds into the Protein kinase domain. Residues 50–58 (LGRGKFAVV) and Lys-73 each bind ATP. Asp-169 functions as the Proton acceptor in the catalytic mechanism.

The protein belongs to the protein kinase superfamily. CAMK Ser/Thr protein kinase family. DAP kinase subfamily. Autophosphorylated. In terms of tissue distribution, highly expressed in bone marrow. Lower levels in brain, heart, lung, liver and kidney.

The protein resides in the nucleus. The catalysed reaction is L-seryl-[protein] + ATP = O-phospho-L-seryl-[protein] + ADP + H(+). The enzyme catalyses L-threonyl-[protein] + ATP = O-phospho-L-threonyl-[protein] + ADP + H(+). With respect to regulation, inhibited by thiazolidinedione-type compounds: inhibited by furan- and pyridone- thiazolidinediones. Functionally, acts as a positive regulator of apoptosis. May also act as a regulator of cellular reactive oxygen species. The sequence is that of Serine/threonine-protein kinase 17A (STK17A) from Oryctolagus cuniculus (Rabbit).